The sequence spans 200 residues: Ciliary neurotrophic factor (200 aa).

This sequence belongs to the CNTF family. In terms of assembly, homodimer. Nervous system.

The protein resides in the cytoplasm. Its function is as follows. CNTF is a survival factor for various neuronal cell types. Seems to prevent the degeneration of motor axons after axotomy. This is Ciliary neurotrophic factor (CNTF) from Homo sapiens (Human).